Here is a 327-residue protein sequence, read N- to C-terminus: Methionine import ATP-binding protein MetN (327 aa).

Positions 3–239 constitute an ABC transporter domain; sequence VELKNIEKIY…PKHAVTKELL (237 aa). Position 36-43 (36-43) interacts with ATP; sequence GYSGAGKS.

The protein belongs to the ABC transporter superfamily. Methionine importer (TC 3.A.1.24) family. As to quaternary structure, the complex is composed of two ATP-binding proteins (MetN), two transmembrane proteins (MetI) and a solute-binding protein (MetQ).

It localises to the cell inner membrane. The catalysed reaction is L-methionine(out) + ATP + H2O = L-methionine(in) + ADP + phosphate + H(+). The enzyme catalyses D-methionine(out) + ATP + H2O = D-methionine(in) + ADP + phosphate + H(+). Functionally, part of the ABC transporter complex MetNIQ involved in methionine import. Responsible for energy coupling to the transport system. The chain is Methionine import ATP-binding protein MetN from Helicobacter pylori (strain J99 / ATCC 700824) (Campylobacter pylori J99).